Reading from the N-terminus, the 307-residue chain is Acetaldehyde dehydrogenase (307 aa).

Residue 12–15 (SGNI) coordinates NAD(+). The active-site Acyl-thioester intermediate is C130. NAD(+)-binding positions include 161–169 (SVGPGTRQN) and N272.

It belongs to the acetaldehyde dehydrogenase family.

It catalyses the reaction acetaldehyde + NAD(+) + CoA = acetyl-CoA + NADH + H(+). This Shewanella halifaxensis (strain HAW-EB4) protein is Acetaldehyde dehydrogenase.